We begin with the raw amino-acid sequence, 96 residues long: uncharacterized protein (96 aa).

This is an uncharacterized protein from Sulfolobus islandicus filamentous virus (isolate Iceland/Hveragerdi) (SIFV).